The sequence spans 213 residues: Dephospho-CoA kinase (213 aa).

A DPCK domain is found at 3–202; the sequence is RIGLTGGIGS…QSYLALADKH (200 aa). Residue 11–16 participates in ATP binding; the sequence is GSGKTR.

This sequence belongs to the CoaE family.

Its subcellular location is the cytoplasm. It catalyses the reaction 3'-dephospho-CoA + ATP = ADP + CoA + H(+). It functions in the pathway cofactor biosynthesis; coenzyme A biosynthesis; CoA from (R)-pantothenate: step 5/5. In terms of biological role, catalyzes the phosphorylation of the 3'-hydroxyl group of dephosphocoenzyme A to form coenzyme A. This chain is Dephospho-CoA kinase, found in Bordetella avium (strain 197N).